Consider the following 211-residue polypeptide: Protein-L-isoaspartate O-methyltransferase (211 aa).

Ser-62 is an active-site residue.

Belongs to the methyltransferase superfamily. L-isoaspartyl/D-aspartyl protein methyltransferase family.

It localises to the cytoplasm. The enzyme catalyses [protein]-L-isoaspartate + S-adenosyl-L-methionine = [protein]-L-isoaspartate alpha-methyl ester + S-adenosyl-L-homocysteine. Its function is as follows. Catalyzes the methyl esterification of L-isoaspartyl residues in peptides and proteins that result from spontaneous decomposition of normal L-aspartyl and L-asparaginyl residues. It plays a role in the repair and/or degradation of damaged proteins. The chain is Protein-L-isoaspartate O-methyltransferase from Shewanella denitrificans (strain OS217 / ATCC BAA-1090 / DSM 15013).